We begin with the raw amino-acid sequence, 104 residues long: Urease subunit beta (104 aa).

This sequence belongs to the urease beta subunit family. In terms of assembly, heterotrimer of UreA (gamma), UreB (beta) and UreC (alpha) subunits. Three heterotrimers associate to form the active enzyme.

Its subcellular location is the cytoplasm. It carries out the reaction urea + 2 H2O + H(+) = hydrogencarbonate + 2 NH4(+). The protein operates within nitrogen metabolism; urea degradation; CO(2) and NH(3) from urea (urease route): step 1/1. The protein is Urease subunit beta of Rhodococcus opacus (strain B4).